Here is a 370-residue protein sequence, read N- to C-terminus: tRNA-specific 2-thiouridylase MnmA (370 aa).

ATP is bound by residues 9–16 (GISGGVDS) and M35. The tract at residues 107 to 109 (NPD) is interaction with target base in tRNA. Residue C112 is the Nucleophile of the active site. A disulfide bridge connects residues C112 and C209. G137 serves as a coordination point for ATP. The interval 159 to 161 (KDQ) is interaction with tRNA. C209 (cysteine persulfide intermediate) is an active-site residue.

Belongs to the MnmA/TRMU family.

The protein resides in the cytoplasm. It catalyses the reaction S-sulfanyl-L-cysteinyl-[protein] + uridine(34) in tRNA + AH2 + ATP = 2-thiouridine(34) in tRNA + L-cysteinyl-[protein] + A + AMP + diphosphate + H(+). Its function is as follows. Catalyzes the 2-thiolation of uridine at the wobble position (U34) of tRNA, leading to the formation of s(2)U34. This is tRNA-specific 2-thiouridylase MnmA from Mycoplasma pneumoniae (strain ATCC 29342 / M129 / Subtype 1) (Mycoplasmoides pneumoniae).